The primary structure comprises 971 residues: Sodium/calcium exchanger 1 (971 aa).

An N-terminal signal peptide occupies residues 1–32; sequence MLRLSLPPNVSMGFRLVTLVALLFTHVDHITA. Topologically, residues 33–71 are extracellular; sequence DTEAETGGNETTECTGSYYCKKGVILPIWEPQDPSFGDK. Asparagine 41 carries an N-linked (GlcNAc...) asparagine glycan. Residues 72–92 form a helical membrane-spanning segment; that stretch reads IARATVYFVAMVYMFLGVSII. At 93-133 the chain is on the cytoplasmic side; the sequence is ADRFMSSIEVITSQEKEITIKKPNGETTKTTVRIWNETVSN. The helical transmembrane segment at 134 to 154 threads the bilayer; the sequence is LTLMALGSSAPEILLSVIEVC. An Alpha-1 repeat occupies 138–178; sequence ALGSSAPEILLSVIEVCGHNFTAGDLGPSTIVGSAAFNMFI. The Extracellular segment spans residues 155-167; that stretch reads GHNFTAGDLGPST. The N-linked (GlcNAc...) asparagine glycan is linked to asparagine 157. Residues 168-188 form a helical membrane-spanning segment; sequence IVGSAAFNMFIIIALCVYVVP. At 189 to 201 the chain is on the cytoplasmic side; the sequence is DGETRKIKHLRVF. Residues 202–222 traverse the membrane as a helical segment; that stretch reads FVTAAWSIFAYTWLYIILSVS. The Extracellular segment spans residues 223–228; sequence SPGVVE. Residues 229 to 249 traverse the membrane as a helical segment; sequence VWEGLLTFFFFPICVVFAWVA. At 250–798 the chain is on the cytoplasmic side; it reads DRRLLFYKYV…FVPPTEYWNG (549 aa). The segment at 251-270 is putative calmodulin-binding region; that stretch reads RRLLFYKYVYKRYRAGKQRG. A phosphoserine mark is found at serine 282 and serine 389. Calx-beta domains lie at 393–493 and 524–624; these read VNMD…VHLS and ATIT…IEIG. Glutamate 417, aspartate 453, aspartate 478, aspartate 479, isoleucine 481, glutamate 483, glutamate 486, aspartate 530, aspartate 531, aspartate 532, glutamate 548, aspartate 584, aspartate 610, glutamate 611, glutamate 612, and glutamate 716 together coordinate Ca(2+). Residues 799–819 traverse the membrane as a helical segment; it reads WACFIVSILMIGLLTAFIGDL. Over 820 to 822 the chain is Extracellular; that stretch reads ASH. Residues 823–843 traverse the membrane as a helical segment; sequence FGCTIGLKDSVTAVVFVALGT. The stretch at 840–876 is one Alpha-2 repeat; it reads ALGTSVPDTFASKVAATQDQYADASIGNVTGSNAVNV. The Cytoplasmic segment spans residues 844 to 872; it reads SVPDTFASKVAATQDQYADASIGNVTGSN. A helical transmembrane segment spans residues 873–893; it reads AVNVFLGIGVAWSIAAIYHAA. Residues 894–904 lie on the Extracellular side of the membrane; it reads NGEQFKVSPGT. A helical transmembrane segment spans residues 905–925; sequence LAFSVTLFTIFAFINVGVLLY. Topologically, residues 926–942 are cytoplasmic; it reads RRRPEIGGELGGPRTAK. A helical membrane pass occupies residues 943–963; the sequence is LLTSSLFVLLWLLYIFFSSLE. At 964 to 971 the chain is on the extracellular side; that stretch reads AYCHIKGF.

The protein belongs to the Ca(2+):cation antiporter (CaCA) (TC 2.A.19) family. SLC8 subfamily. As to expression, detected in heart, brain cortex and hippocampus (at protein level). Cardiac sarcolemma or brain, and spleen. Expressed in all regions of the kidney, highest levels of expression in the distal convoluted tubule. Expressed throughout the CNS, in decreasing order of abundance in hippocampus, cortex, cerebellum, hypothalamus, midbrain and striatum. Expressed in numerous regions of the brain including multiple cortical layers, hippocampus, septal nuclei, thalamic nuclei, cerebellum, hypothalamus, olfactory bulb and brainstem. Also expressed in various regions of the spinal cord, ventricles and atria of the heart, lung, adrenals and kidney. Isoform 4 seems to be a predominant isoform in aorta, stomach, liver, and kidney.

The protein resides in the cell membrane. It localises to the cell projection. The protein localises to the dendrite. The catalysed reaction is Ca(2+)(in) + 3 Na(+)(out) = Ca(2+)(out) + 3 Na(+)(in). Activated by micromolar levels of Ca(2+). Its activity is regulated as follows. Only active at low calcium concentrations. Not activated by PKC. With respect to regulation, active at all calcium levels tested. Activated by PKC. Only active at low calcium concentrations. Activated by PKC. Its function is as follows. Mediates the exchange of one Ca(2+) ion against three to four Na(+) ions across the cell membrane, and thereby contributes to the regulation of cytoplasmic Ca(2+) levels and Ca(2+)-dependent cellular processes. Contributes to Ca(2+) transport during excitation-contraction coupling in muscle. In a first phase, voltage-gated channels mediate the rapid increase of cytoplasmic Ca(2+) levels due to release of Ca(2+) stores from the endoplasmic reticulum. SLC8A1 mediates the export of Ca(2+) from the cell during the next phase, so that cytoplasmic Ca(2+) levels rapidly return to baseline. Required for normal embryonic heart development and the onset of heart contractions. This chain is Sodium/calcium exchanger 1 (Slc8a1), found in Rattus norvegicus (Rat).